The following is a 217-amino-acid chain: Orotate phosphoribosyltransferase (217 aa).

5-phospho-alpha-D-ribose 1-diphosphate is bound at residue Lys-26. An orotate-binding site is contributed by 34 to 35 (FF). 5-phospho-alpha-D-ribose 1-diphosphate is bound by residues 72–73 (YK), Arg-99, Lys-100, Lys-103, His-105, and 124–132 (DDVITAGTA). 2 residues coordinate orotate: Thr-128 and Arg-156.

The protein belongs to the purine/pyrimidine phosphoribosyltransferase family. PyrE subfamily. As to quaternary structure, homodimer. Mg(2+) serves as cofactor.

It catalyses the reaction orotidine 5'-phosphate + diphosphate = orotate + 5-phospho-alpha-D-ribose 1-diphosphate. It functions in the pathway pyrimidine metabolism; UMP biosynthesis via de novo pathway; UMP from orotate: step 1/2. Its function is as follows. Catalyzes the transfer of a ribosyl phosphate group from 5-phosphoribose 1-diphosphate to orotate, leading to the formation of orotidine monophosphate (OMP). In Aeromonas salmonicida (strain A449), this protein is Orotate phosphoribosyltransferase.